The chain runs to 371 residues: uncharacterized protein (371 aa).

A Zn(2+)-binding site is contributed by His-76. Asp-78 is a catalytic residue. Asp-106 serves as a coordination point for Zn(2+). Residue Glu-139 is the Proton acceptor of the active site. Residues Glu-140, Asp-163, and His-344 each contribute to the Zn(2+) site.

This sequence belongs to the peptidase M20A family. Zn(2+) is required as a cofactor.

In terms of biological role, could be a peptidase. This is an uncharacterized protein from Bacillus subtilis (strain 168).